Consider the following 362-residue polypeptide: GDSL esterase/lipase At5g45670 (362 aa).

The N-terminal stretch at 1–23 is a signal peptide; it reads MARMSLMIMMIMVAVTMINIAKS. The active-site Nucleophile is the S36. Residues D326 and H329 contribute to the active site.

This sequence belongs to the 'GDSL' lipolytic enzyme family.

The protein localises to the secreted. The sequence is that of GDSL esterase/lipase At5g45670 from Arabidopsis thaliana (Mouse-ear cress).